We begin with the raw amino-acid sequence, 310 residues long: MRTHDDTWDIKTSVGATAVMVAAARAVETDRPDPLIRDPYARLLVTNAGAGAIWEAMLDPTLVAKAAAIDAETAAIVAYLRSYQAVRTNFFDTYFASAVAAGIRQVVILASGLDSRAYRLDWPAGTIVYEIDQPKVLSYKSTTLAENGVTPSAGRREVPADLRQDWPAALRDAGFDPTARTAWLAEGLLMYLPAEAQDRLFTQVGAVSVAGSRIAAETAPVHGEERRAEMRARFKKVADVLGIEQTIDVQELVYHDQDRASVADWLTDHGWRARSQRAPDEMRRVGRWVEGVPMADDPTAFAEFVTAERL.

S-adenosyl-L-methionine contacts are provided by residues Asp132 and 161 to 162; that span reads DL.

It belongs to the UPF0677 family.

Its function is as follows. Exhibits S-adenosyl-L-methionine-dependent methyltransferase activity. The polypeptide is Putative S-adenosyl-L-methionine-dependent methyltransferase Mb0151 (Mycobacterium bovis (strain ATCC BAA-935 / AF2122/97)).